The chain runs to 107 residues: Polyketide synthase CurG (107 aa).

It functions in the pathway antibiotic biosynthesis; curamycin biosynthesis. The polypeptide is Polyketide synthase CurG (curG) (Streptomyces cyaneus (Streptomyces curacoi)).